Here is a 1002-residue protein sequence, read N- to C-terminus: DNA-directed RNA polymerase 1, mitochondrial (1002 aa).

A mitochondrion-targeting transit peptide spans 1-21 (MWRYISKQAYSRKFRNSHDSA). Residues aspartate 703, lysine 778, and aspartate 935 contribute to the active site.

Belongs to the phage and mitochondrial RNA polymerase family. In terms of tissue distribution, the highest levels of expression are detected in the mature leaves. The level of expression is lowest in the cotyledons.

Its subcellular location is the mitochondrion. The enzyme catalyses RNA(n) + a ribonucleoside 5'-triphosphate = RNA(n+1) + diphosphate. DNA-dependent RNA polymerase catalyzes the transcription of DNA into RNA using the four ribonucleoside triphosphates as substrates. In Nicotiana sylvestris (Wood tobacco), this protein is DNA-directed RNA polymerase 1, mitochondrial (RPOT1).